The chain runs to 235 residues: 7-cyano-7-deazaguanine synthase (235 aa).

An ATP-binding site is contributed by Phe-16–Leu-26. 4 residues coordinate Zn(2+): Cys-195, Cys-204, Cys-207, and Cys-210.

It belongs to the QueC family. Zn(2+) serves as cofactor.

The enzyme catalyses 7-carboxy-7-deazaguanine + NH4(+) + ATP = 7-cyano-7-deazaguanine + ADP + phosphate + H2O + H(+). It functions in the pathway purine metabolism; 7-cyano-7-deazaguanine biosynthesis. Functionally, catalyzes the ATP-dependent conversion of 7-carboxy-7-deazaguanine (CDG) to 7-cyano-7-deazaguanine (preQ(0)). This chain is 7-cyano-7-deazaguanine synthase, found in Shewanella frigidimarina (strain NCIMB 400).